The sequence spans 714 residues: DNA ligase (714 aa).

Residues Asp-48–Asp-52, Ser-97–Leu-98, and Glu-129 each bind NAD(+). Lys-131 serves as the catalytic N6-AMP-lysine intermediate. Arg-152, Glu-189, Lys-307, and Lys-331 together coordinate NAD(+). Residues Cys-436, Cys-439, Cys-454, and Cys-460 each contribute to the Zn(2+) site. Residues Lys-637–Gly-714 form the BRCT domain.

It belongs to the NAD-dependent DNA ligase family. LigA subfamily. Requires Mg(2+) as cofactor. Mn(2+) is required as a cofactor.

The catalysed reaction is NAD(+) + (deoxyribonucleotide)n-3'-hydroxyl + 5'-phospho-(deoxyribonucleotide)m = (deoxyribonucleotide)n+m + AMP + beta-nicotinamide D-nucleotide.. Functionally, DNA ligase that catalyzes the formation of phosphodiester linkages between 5'-phosphoryl and 3'-hydroxyl groups in double-stranded DNA using NAD as a coenzyme and as the energy source for the reaction. It is essential for DNA replication and repair of damaged DNA. The chain is DNA ligase from Rhodopseudomonas palustris (strain BisB5).